The sequence spans 75 residues: MSRVCPLTLKKCNHAFRVTYSHKRNHRRQFVNLQKKRIFINNEWVVLKISTKAIKTLKSKTLKSKTFSNARLLHL.

The protein belongs to the bacterial ribosomal protein bL28 family.

It is found in the plastid. It localises to the chloroplast. The polypeptide is Large ribosomal subunit protein bL28c (Cyanidioschyzon merolae (strain NIES-3377 / 10D) (Unicellular red alga)).